The following is a 179-amino-acid chain: Inner membrane-spanning protein YciB (179 aa).

The next 5 helical transmembrane spans lie at 22–42, 50–70, 76–96, 121–141, and 149–169; these read IYAATTALIVATAIVLIYSWV, MALITFVLVVVFGGLTLFFHN, WKVTVIYALFAGALLVSQWVM, LAWAVFFILCGLANIYIAFWL, and FKVFGLTALTLIFTLLSGIYI.

Belongs to the YciB family.

It localises to the cell inner membrane. Its function is as follows. Plays a role in cell envelope biogenesis, maintenance of cell envelope integrity and membrane homeostasis. This is Inner membrane-spanning protein YciB from Shigella dysenteriae serotype 1 (strain Sd197).